The primary structure comprises 247 residues: Carboxy-S-adenosyl-L-methionine synthase (247 aa).

S-adenosyl-L-methionine-binding positions include tyrosine 40, 65–67 (GSS), 90–91 (DN), 122–123 (DI), asparagine 137, and arginine 204.

Belongs to the class I-like SAM-binding methyltransferase superfamily. Cx-SAM synthase family. In terms of assembly, homodimer.

The enzyme catalyses prephenate + S-adenosyl-L-methionine = carboxy-S-adenosyl-L-methionine + 3-phenylpyruvate + H2O. Its function is as follows. Catalyzes the conversion of S-adenosyl-L-methionine (SAM) to carboxy-S-adenosyl-L-methionine (Cx-SAM). The protein is Carboxy-S-adenosyl-L-methionine synthase of Pseudomonas fluorescens (strain SBW25).